Consider the following 319-residue polypeptide: tRNA uridine(34) hydroxylase (319 aa).

Residues K127–E221 form the Rhodanese domain. C181 serves as the catalytic Cysteine persulfide intermediate.

This sequence belongs to the TrhO family.

It catalyses the reaction uridine(34) in tRNA + AH2 + O2 = 5-hydroxyuridine(34) in tRNA + A + H2O. Catalyzes oxygen-dependent 5-hydroxyuridine (ho5U) modification at position 34 in tRNAs. The polypeptide is tRNA uridine(34) hydroxylase (Bacillus mycoides (strain KBAB4) (Bacillus weihenstephanensis)).